A 231-amino-acid chain; its full sequence is 2-C-methyl-D-erythritol 4-phosphate cytidylyltransferase (231 aa).

Belongs to the IspD/TarI cytidylyltransferase family. IspD subfamily.

It carries out the reaction 2-C-methyl-D-erythritol 4-phosphate + CTP + H(+) = 4-CDP-2-C-methyl-D-erythritol + diphosphate. It functions in the pathway isoprenoid biosynthesis; isopentenyl diphosphate biosynthesis via DXP pathway; isopentenyl diphosphate from 1-deoxy-D-xylulose 5-phosphate: step 2/6. Its function is as follows. Catalyzes the formation of 4-diphosphocytidyl-2-C-methyl-D-erythritol from CTP and 2-C-methyl-D-erythritol 4-phosphate (MEP). This Mycobacterium bovis (strain BCG / Pasteur 1173P2) protein is 2-C-methyl-D-erythritol 4-phosphate cytidylyltransferase.